We begin with the raw amino-acid sequence, 378 residues long: Envelope glycoprotein M (378 aa).

At 1 to 16 the chain is on the intravirion side; it reads MKSSKSDLFIYKTWFK. Residues 17–37 traverse the membrane as a helical segment; it reads LLVLYFVMFVLSATVPIAASF. Topologically, residues 38-84 are virion surface; it reads PGLGFPCYYNALVNYSAINLTERNVAKHLTPTLYLEEPEMFAYMTFT. The helical transmembrane segment at 85–105 threads the bilayer; that stretch reads FLVDCFAAVYYFLGALAIMLA. At 106–118 the chain is on the intravirion side; that stretch reads KRHFVVSLTTLSQ. Residues 119–139 traverse the membrane as a helical segment; it reads WIAMVGTPTLILIGMWRMWTI. The Virion surface portion of the chain corresponds to 140-150; the sequence is QLFIQTLSYKH. A helical membrane pass occupies residues 151–171; sequence IYLSAFVYLIHFLLSFLHTQC. Topologically, residues 172-210 are intravirion; it reads YISRNSQLWSLKVLEQGIPPNTLLDTVVFTIKPLLANCQ. A helical transmembrane segment spans residues 211–231; it reads LFCLGLEMLVFSLSFMMAIGN. Residues 232-239 lie on the Virion surface side of the membrane; the sequence is SFYVLVSD. A helical membrane pass occupies residues 240-260; it reads IVFGAINLYLALVLFWVLLTE. Residues 261 to 268 lie on the Intravirion side of the membrane; it reads LYLVKYMT. A helical transmembrane segment spans residues 269–289; it reads FVMGFYLGGLIGCIFLLVPLW. Topologically, residues 290–303 are virion surface; sequence RYEQIFVAANLRSP. A helical transmembrane segment spans residues 304–324; it reads ILINILVIFFLCTLSALVRLL. Over 325 to 378 the chain is Intravirion; the sequence is RMTWFSPTKPSYEPIQLKNIKHRRVKLQSPSGPSILEEGSSDEGSEDSEEEEEL. The disordered stretch occupies residues 347 to 378; sequence RRVKLQSPSGPSILEEGSSDEGSEDSEEEEEL. The segment covering 363-378 has biased composition (acidic residues); it reads GSSDEGSEDSEEEEEL.

This sequence belongs to the herpesviridae glycoprotein M family. Interacts (via N-terminus) with gN (via N-terminus). The gM-gN heterodimer forms the gCII complex.

Its subcellular location is the virion membrane. The protein localises to the host Golgi apparatus. The protein resides in the host trans-Golgi network. It is found in the host endosome membrane. It localises to the host nucleus inner membrane. Its function is as follows. Envelope glycoprotein important for virion assembly and egress. Plays a role in the correct incorporation of gH-gL into virion membrane. Directs the glycoprotein N (gN) to the host trans-Golgi network. The protein is Envelope glycoprotein M of Equus caballus (Horse).